Here is a 203-residue protein sequence, read N- to C-terminus: Recombination protein RecR (203 aa).

The C4-type zinc finger occupies 56–71 (CTVCGNVSDDERCRIC). In terms of domain architecture, Toprim spans 79–179 (SVVCVVEEPK…TVTRIASGLP (101 aa)).

It belongs to the RecR family.

In terms of biological role, may play a role in DNA repair. It seems to be involved in an RecBC-independent recombinational process of DNA repair. It may act with RecF and RecO. This is Recombination protein RecR from Mycobacterium leprae (strain TN).